The sequence spans 122 residues: Large ribosomal subunit protein uL14c (122 aa).

Belongs to the universal ribosomal protein uL14 family. Part of the 50S ribosomal subunit.

Its subcellular location is the plastid. Functionally, binds to 23S rRNA. In Cuscuta exaltata (Tall dodder), this protein is Large ribosomal subunit protein uL14c.